The chain runs to 550 residues: MNRLTNISKIRKSLIDGKLKVNDLVLNKIKEINKVSPNHLNTFISLQDEKSLGKQIKESQERYDNGTNKRLDGIPIGVKDNFSSKNFKTTCGSKILENYIPSFDSTVVKLLKEEGAIIIGKTNMDEFSMGSSSTSGHFGKVINPWSKPNNNNNNDNDNNNNGEVLYVAGGSSGGSAAAVASNYCVASIGSDTGGSIRQPSSYCGVVGFKPSYGLISRFGLVAYASSLDTPGVLTNNVEDAAELLDILIKKDQENDSTSIEFINNNQNQNQNNGEKRNILDEFNEKLKNKNIKDLVFGIPKDYLVKELDTDILNLWKEVVEEIEKRGGKVVSVSLPHTRYALPAYYLLATSEASSNLSRFDGVRYGYRFEEEKDENKVDNDNDDDDDVDENKIGMGLKDMYTKTRTNGFGEEVKKRIILGTMALSRSSYDNFYTKAQKIRRLVSDDFKNVFQGENKVDILITPTAPSPAFKQNEKMDPIEVYVNDIMTIPSNLAGLPACSIPLKLSNSNLPISVQLISNRLTDDNLLFAAHTIMNFDCYKDFTSLTPNYLK.

Residues lysine 79 and serine 171 each act as charge relay system in the active site. Serine 195 functions as the Acyl-ester intermediate in the catalytic mechanism. Residues 371–390 (EKDENKVDNDNDDDDDVDEN) form a disordered region.

It belongs to the amidase family. GatA subfamily. In terms of assembly, subunit of the heterotrimeric GatCAB amidotransferase (AdT) complex, composed of A, B and C subunits.

The protein resides in the mitochondrion. The catalysed reaction is L-glutamyl-tRNA(Gln) + L-glutamine + ATP + H2O = L-glutaminyl-tRNA(Gln) + L-glutamate + ADP + phosphate + H(+). Its function is as follows. Allows the formation of correctly charged Gln-tRNA(Gln) through the transamidation of misacylated Glu-tRNA(Gln) in the mitochondria. The reaction takes place in the presence of glutamine and ATP through an activated gamma-phospho-Glu-tRNA(Gln). In Dictyostelium discoideum (Social amoeba), this protein is Glutamyl-tRNA(Gln) amidotransferase subunit A, mitochondrial.